The following is a 476-amino-acid chain: Cytosolic iron-sulfur assembly component 3 (476 aa).

N-acetylalanine is present on A2. [4Fe-4S] cluster contacts are provided by C24, C71, C74, C77, C190, C246, C395, and C399.

It belongs to the NARF family. In terms of assembly, external component of the CIA complex. In the CIA complex, interacts directly with CIAO1 and MMS19.

In terms of biological role, component of the cytosolic iron-sulfur protein assembly (CIA) complex, a multiprotein complex that mediates the incorporation of iron-sulfur cluster into extramitochondrial Fe/S proteins. Seems to negatively regulate the level of HIF1A expression, although this effect could be indirect. This Rattus norvegicus (Rat) protein is Cytosolic iron-sulfur assembly component 3.